The following is a 179-amino-acid chain: Large ribosomal subunit protein uL6 (179 aa).

Belongs to the universal ribosomal protein uL6 family. Part of the 50S ribosomal subunit.

Functionally, this protein binds to the 23S rRNA, and is important in its secondary structure. It is located near the subunit interface in the base of the L7/L12 stalk, and near the tRNA binding site of the peptidyltransferase center. The polypeptide is Large ribosomal subunit protein uL6 (Synechococcus sp. (strain CC9311)).